The sequence spans 361 residues: Peptide chain release factor 1 (361 aa).

Gln-235 is modified (N5-methylglutamine).

Belongs to the prokaryotic/mitochondrial release factor family. Post-translationally, methylated by PrmC. Methylation increases the termination efficiency of RF1.

It localises to the cytoplasm. Peptide chain release factor 1 directs the termination of translation in response to the peptide chain termination codons UAG and UAA. The polypeptide is Peptide chain release factor 1 (Azoarcus sp. (strain BH72)).